The chain runs to 70 residues: UPF0270 protein VP2791 (70 aa).

The protein belongs to the UPF0270 family.

This chain is UPF0270 protein VP2791, found in Vibrio parahaemolyticus serotype O3:K6 (strain RIMD 2210633).